A 181-amino-acid polypeptide reads, in one-letter code: Large ribosomal subunit protein uL6 (181 aa).

It belongs to the universal ribosomal protein uL6 family. As to quaternary structure, part of the 50S ribosomal subunit.

Its function is as follows. This protein binds to the 23S rRNA, and is important in its secondary structure. It is located near the subunit interface in the base of the L7/L12 stalk, and near the tRNA binding site of the peptidyltransferase center. This is Large ribosomal subunit protein uL6 from Saccharolobus solfataricus (strain ATCC 35092 / DSM 1617 / JCM 11322 / P2) (Sulfolobus solfataricus).